The sequence spans 198 residues: MGAWSGFGITFETMFRKSFTQGYPEKGKEKPMPPRMHGRHQLNRWPDGLEKCVGCELCAWACPADAIYVEGADNTDEERYSPGERYGRVYEINYLRCILCGMCIEACPTRALTMTNDFKMADTSRAKHIWTKDELLAPLKEGMEQPPHPRRLGDDEDDYFNGLPPSGQDDVRTGPANSGATAHRDDDNDTQHKDEEAA.

4Fe-4S ferredoxin-type domains lie at 42 to 72 (LNRWPDGLEKCVGCELCAWACPADAIYVEGA) and 88 to 117 (RVYEINYLRCILCGMCIEACPTRALTMTND). The [4Fe-4S] cluster site is built by Cys52, Cys55, Cys58, Cys62, Cys97, Cys100, Cys103, and Cys107. The segment at 137–198 (APLKEGMEQP…DTQHKDEEAA (62 aa)) is disordered. A compositionally biased stretch (basic and acidic residues) spans 182–198 (AHRDDDNDTQHKDEEAA).

This sequence belongs to the complex I 23 kDa subunit family. As to quaternary structure, NDH-1 is composed of 14 different subunits. Subunits NuoA, H, J, K, L, M, N constitute the membrane sector of the complex. It depends on [4Fe-4S] cluster as a cofactor.

The protein resides in the cell membrane. The catalysed reaction is a quinone + NADH + 5 H(+)(in) = a quinol + NAD(+) + 4 H(+)(out). NDH-1 shuttles electrons from NADH, via FMN and iron-sulfur (Fe-S) centers, to quinones in the respiratory chain. The immediate electron acceptor for the enzyme in this species is believed to be ubiquinone. Couples the redox reaction to proton translocation (for every two electrons transferred, four hydrogen ions are translocated across the cytoplasmic membrane), and thus conserves the redox energy in a proton gradient. The polypeptide is NADH-quinone oxidoreductase subunit I (Cutibacterium acnes (strain DSM 16379 / KPA171202) (Propionibacterium acnes)).